The following is a 217-amino-acid chain: ATP synthase subunit 4, mitochondrial (217 aa).

Residues 1 to 14 (MPFARVGALSARHY) constitute a mitochondrion transit peptide. 2 helical membrane passes run 41–61 (GVLA…LYIV) and 66–86 (IVLG…GPGY).

In terms of assembly, F-type ATP synthases have 2 components, the catalytic core F(1) and the membrane-embedded component F(0), linked together by a central stalk and a peripheral stalk. The central stalk, also called rotor shaft, is often seen as part of F(1). The peripheral stalk is seen as part of F(0). F(0) contains the membrane channel next to the rotor. F-type ATP synthases form dimers but each monomer functions independently in ATP generation. The dimer consists of 17 different polypeptides: ATP1 (subunit alpha, 3 molecules per monomer, part of F(1)), ATP2 (subunit beta, 3 copies per monomer, part of F(1)), ATP3 (subunit gamma, part of the central stalk), ATP4 (subunit b, part of the peripheral stalk), ATP5/OSCP (subunit 5/OSCP, part of the peripheral stalk), ATP6 (subunit a, part of the peripheral stalk), ATP7 (subunit d, part of the peripheral stalk), ATP8 (subunit 8, part of the peripheral stalk), OLI1 (subunit c, part of the rotor, 10 molecules per monomer), ATP14 (subunit h, part of the peripheral stalk), ATP15 (subunit epsilon, part of the central stalk), ATP16 (subunit delta, part of the central stalk), ATP17 (subunit f, part of the peripheral stalk), ATP18 (subunit i/j, part of the peripheral stalk), ATP19 (subunit k, dimer-specific, at interface between monomers), ATP20 (subunit g, at interface between monomers), TIM11 (subunit e, at interface between monomers).

The protein resides in the mitochondrion inner membrane. In terms of biological role, mitochondrial membrane ATP synthase (F(1)F(0) ATP synthase or Complex V) produces ATP from ADP in the presence of a proton gradient across the membrane which is generated by electron transport complexes of the respiratory chain. F-type ATP synthases consist of two structural domains, F(1) - containing the extramembraneous catalytic core, and F(0) - containing the membrane proton channel, linked together by a central stalk and a peripheral stalk. During catalysis, ATP synthesis in the catalytic domain of F(1) is coupled via a rotary mechanism of the central stalk subunits to proton translocation. Part of the complex F(0) domain and the peripheral stalk, which acts as a stator to hold the catalytic alpha/ATP1(3)beta/ATP2(3) subcomplex and subunit a/ATP6 static relative to the rotary elements. The sequence is that of ATP synthase subunit 4, mitochondrial from Yarrowia lipolytica (strain CLIB 122 / E 150) (Yeast).